Here is an 827-residue protein sequence, read N- to C-terminus: Multiphosphoryl transfer protein (827 aa).

The region spanning 2–142 (IPLTSELVAI…AVIVARLTGA (141 aa)) is the PTS EIIA type-2 domain. His-62 (tele-phosphohistidine intermediate; for EIIA activity) is an active-site residue. The residue at position 62 (His-62) is a Phosphohistidine; by HPr. One can recognise an HPr domain in the interval 157 to 245 (AQGIDVVVTG…AFEAGLEDEE (89 aa)). Residue His-171 is the Pros-phosphohistidine intermediate; for HPr activity of the active site. A Phosphohistidine; by EI modification is found at His-171. Positions 270 to 827 (EGRTLVGISS…TTAAEVRGLK (558 aa)) are PTS EI. The Tele-phosphohistidine intermediate; for PTS EI activity role is filled by His-457. The residue at position 457 (His-457) is a Phosphohistidine; by autocatalysis. Phosphoenolpyruvate is bound by residues Arg-564 and Arg-600. The Mg(2+) site is built by Glu-693 and Asp-717. Residues 716–717 (ND) and Arg-727 each bind phosphoenolpyruvate. Cys-764 functions as the Proton donor in the catalytic mechanism.

The protein belongs to the PEP-utilizing enzyme family. The cofactor is Mg(2+).

It is found in the cytoplasm. It catalyses the reaction L-histidyl-[protein] + phosphoenolpyruvate = N(pros)-phospho-L-histidyl-[protein] + pyruvate. The phosphoenolpyruvate-dependent sugar phosphotransferase system (sugar PTS), a major carbohydrate active transport system, catalyzes the phosphorylation of incoming sugar substrates concomitantly with their translocation across the cell membrane. The enzyme II FruAB PTS system is involved in fructose transport. The polypeptide is Multiphosphoryl transfer protein (Rhodobacter capsulatus (Rhodopseudomonas capsulata)).